A 99-amino-acid polypeptide reads, in one-letter code: Single insulin-like growth factor-binding domain protein-2 (99 aa).

A signal peptide spans 1 to 18; that stretch reads MESLFIFAFGMMLSSASA. Positions 19 to 98 constitute an IGFBP N-terminal domain; that stretch reads LSCIPCVPEE…GQEVGRCRKK (80 aa). S20 carries O-linked (GalNAc...) serine glycosylation. Disulfide bonds link C21/C44, C24/C46, C29/C47, C35/C50, C58/C74, and C68/C95.

Expressed in hemocytes.

It is found in the secreted. Its function is as follows. Has a role in the innate immune system. This is Single insulin-like growth factor-binding domain protein-2 from Cupiennius salei (American wandering spider).